A 526-amino-acid polypeptide reads, in one-letter code: Putative ankyrin repeat protein R840 (526 aa).

ANK repeat units follow at residues 78–107 (TLNECLFISCKRGRNDFVKYFVSKGANIRS), 108–137 (RDNFAIKLACEHGHIEVVKYLIDNGVDIRS), 139–167 (KNYAVRIACNNGHIDIVKLLISKGANIRD), 169–197 (DNCAIKWASENGHIEIVKILVSQGYDSTS), 198–227 (NFNEPVILAVKNGHLEVVKYLVSQSDRCRN), 229–255 (SAIISAAENGHIEIVKFLASRGSNIRI), 256–285 (DDDYTIRIASGNGHLEVVKFLVSKGCNIRS), 286–315 (EIDHAVQWASTNGHLEVVEYLVSQGADIKS), 317–345 (YDRSVRCASQNGHIEVVKYLVSQGANIRN), 346–375 (INDYAVRYASENGHIEVVEYLVSQGANIRV), 376–405 (DNDSPLLRACLKGHIKVVKFLVSSGADIRV), 406–435 (NNYQPLLIAAGNGHLEILKYLVSQGVNVSI), 437–467 (NVPLVGIACIDGYGYFEIVKYLVSIGADINL), 468–497 (ADDMAIRLASEYGHLDIVKYLVENGANVRA), and 499–526 (NDYAIKQAHRKGHQEVVNYLLSKGAILS).

In Acanthamoeba polyphaga (Amoeba), this protein is Putative ankyrin repeat protein R840.